The primary structure comprises 351 residues: Fe(3+) ions import ATP-binding protein FbpC (351 aa).

The ABC transporter domain maps to 7–241 (LTVKNLNKFF…PNHLETAKFM (235 aa)). Position 39 to 46 (39 to 46 (GASGCGKT)) interacts with ATP.

It belongs to the ABC transporter superfamily. Fe(3+) ion importer (TC 3.A.1.10) family. As to quaternary structure, the complex is composed of two ATP-binding proteins (FbpC), two transmembrane proteins (FbpB) and a solute-binding protein (FbpA).

It localises to the cell inner membrane. The enzyme catalyses Fe(3+)(out) + ATP + H2O = Fe(3+)(in) + ADP + phosphate + H(+). In terms of biological role, part of the ABC transporter complex FbpABC involved in Fe(3+) ions import. Responsible for energy coupling to the transport system. In Haemophilus influenzae (strain 86-028NP), this protein is Fe(3+) ions import ATP-binding protein FbpC.